The primary structure comprises 193 residues: MKGDMDLSVLPNNNHPDKFLQLDVKSLMRSSTLLQASLARFPGGNYPATQHWQNLVYSQREKTIATQRIKGFGVENPVLPESPPASMSSVMKNNPLYGDITLEEAMEERKKSPSWTIEEYDKHSVHTNLSGHLKENPNDLRFWLGDTYTPGFDTLLKKKKKRNKRSKLCHMGLILLLVASILVTIVTLSTIFS.

Position 82 is a phosphoserine (S82). N128 is a glycosylation site (N-linked (GlcNAc...) asparagine). Residues 172 to 192 (GLILLLVASILVTIVTLSTIF) form a helical membrane-spanning segment.

This sequence belongs to the MINAR family. Interacts with NOTCH2. As to expression, widely expressed in the cortex and Purkinje cells of cerebellum. Expressed in the inner ear, mainly in the hair cells, spiral ganglia, the spiral limbus, and the stria vascularis.

It is found in the lysosome membrane. Its subcellular location is the endoplasmic reticulum membrane. Functionally, binds cholesterol and may regulate the distribution and homeostasis of cholesterol in hair cells. May play a role in angiogenesis. In Mus musculus (Mouse), this protein is Major intrinsically disordered NOTCH2-binding receptor 1-like homolog.